A 167-amino-acid polypeptide reads, in one-letter code: uncharacterized protein (167 aa).

The 148-residue stretch at 1 to 148 (MLIRVEIPID…SAFQVHRLAD (148 aa)) folds into the N-acetyltransferase domain.

Belongs to the acetyltransferase family.

This is an uncharacterized protein from Escherichia coli O157:H7.